A 237-amino-acid polypeptide reads, in one-letter code: Probable 2-phosphosulfolactate phosphatase (237 aa).

This sequence belongs to the ComB family. Mg(2+) serves as cofactor.

The enzyme catalyses (2R)-O-phospho-3-sulfolactate + H2O = (2R)-3-sulfolactate + phosphate. This is Probable 2-phosphosulfolactate phosphatase from Thermus thermophilus (strain ATCC 27634 / DSM 579 / HB8).